Reading from the N-terminus, the 490-residue chain is Bifunctional protein HldE (490 aa).

A ribokinase region spans residues 1 to 330 (MFDFDDLSQA…RKILPHAYRA (330 aa)). 205-208 (NRKE) contacts ATP. Residue aspartate 275 is part of the active site. Residues 358–490 (FTNGCFDILH…LVDRARSDQR (133 aa)) form a cytidylyltransferase region.

The protein in the N-terminal section; belongs to the carbohydrate kinase PfkB family. It in the C-terminal section; belongs to the cytidylyltransferase family. As to quaternary structure, homodimer.

It catalyses the reaction D-glycero-beta-D-manno-heptose 7-phosphate + ATP = D-glycero-beta-D-manno-heptose 1,7-bisphosphate + ADP + H(+). The enzyme catalyses D-glycero-beta-D-manno-heptose 1-phosphate + ATP + H(+) = ADP-D-glycero-beta-D-manno-heptose + diphosphate. It functions in the pathway nucleotide-sugar biosynthesis; ADP-L-glycero-beta-D-manno-heptose biosynthesis; ADP-L-glycero-beta-D-manno-heptose from D-glycero-beta-D-manno-heptose 7-phosphate: step 1/4. The protein operates within nucleotide-sugar biosynthesis; ADP-L-glycero-beta-D-manno-heptose biosynthesis; ADP-L-glycero-beta-D-manno-heptose from D-glycero-beta-D-manno-heptose 7-phosphate: step 3/4. Catalyzes the phosphorylation of D-glycero-D-manno-heptose 7-phosphate at the C-1 position to selectively form D-glycero-beta-D-manno-heptose-1,7-bisphosphate. In terms of biological role, catalyzes the ADP transfer from ATP to D-glycero-beta-D-manno-heptose 1-phosphate, yielding ADP-D-glycero-beta-D-manno-heptose. The chain is Bifunctional protein HldE from Bradyrhizobium sp. (strain ORS 278).